The following is a 1071-amino-acid chain: MAGAIENARKEIKRISLEDHAESEYGAIYSVSGPVVIAENMIGCAMYELVKVGHDNLVGEVIRIDGDKATIQVYEETAGLTVGDPVLRTGKPLSVELGPGLMETIYDGIQRPLKAIKEESQSIYIPRGIDTPALDRTIKWQFTPGKFQVGDHISGGDIYGSVFENSLISSHKILLPPRSRGTITWIAPAGEYTLDEKILEVEFDGKKSDFTLYHTWPVRVPRPVTEKLSADYPLLTGQRVLDALFPCVQGGTTCIPGAFGCGKTVISQSLSKYSNSDAIIYVGCFAKGTNVLMADGSIECIENIEVGNKVMGKDGRPREVIKLPRGRETMYSVVQKSQHRAHKSDSSREVPELLKFTCNATHELVVRTPRSVRRLSRTIKGVEYFEVITFEMGQKKAPDGRIVELVKEVSKSYPISEGPERANELVESYRKASNKAYFEWTIEARDLSLLGSHVRKATYQTYAPILYENDHFFDYMQKSKFHLTIEGPKVLAYLLGLWIGDGLSDRATFSVDSRDTSLMERVTEYAEKLNLCAEYKDRKEPQVAKTVNLYSKVVRGNGIRNNLNTENPLWDAIVGLGFLKDGVKNIPSFLSTDNIGTRETFLAGLIDSDGYVTDEHGIKATIKTIHTSVRDGLVSLARSLGLVVSVNAEPAKVDMNGTKHKISYAIYMSGGDVLLNVLSKCAGSKKFRPAPAAAFARECRGFYFELQELKEDDYYGITLSDDSDHQFLLANQVVVHNCGERGNEMAEVLMEFPELYTEMSGTKEPIMKRTTLVANTSNMPVAAREASIYTGITLAEYFRDQGKNVSMIADSSSRWAEALREISGRLGEMPADQGFPAYLGAKLASFYERAGKAVALGSPDRTGSVSIVAAVSPAGGDFSDPVTTATLGITQVFWGLDKKLAQRKHFPSINTSVSYSKYTNVLNKFYDSNYPEFPVLRDRMKEILSNAEELEQVVQLVGKSALSDSDKITLDVATLIKEDFLQQNGYSTYDAFCPIWKTFDMMRAFISYHDEAQKAVANGANWSKLADSTGDVKHAVSSSKFFEPSRGEKEVHGEFEKLLSTMQERFAESTD.

The residue at position 2 (Ala2) is an N-acetylalanine. Thr131 is modified (phosphothreonine). 257–264 (GAFGCGKT) is a binding site for ATP. The region spanning 494–642 (LLGLWIGDGL…LVSLARSLGL (149 aa)) is the DOD-type homing endonuclease domain. A phosphoserine mark is found at Ser858 and Ser928.

The protein belongs to the ATPase alpha/beta chains family. As to quaternary structure, V-ATPase is a heteromultimeric enzyme composed of a peripheral catalytic V1 complex (components A to H) attached to an integral membrane V0 proton pore complex (components: a, c, c', c'', d, e, f and VOA1). Interacts with RAV1 and RAV2 components of the RAVE complex, which are essential for the stability and assembly of V-ATPase. Post-translationally, this protein undergoes a protein self splicing that involves a post-translational excision of the VDE intervening region (intein) followed by peptide ligation.

The protein localises to the vacuole membrane. The catalysed reaction is ATP + H2O + 4 H(+)(in) = ADP + phosphate + 5 H(+)(out). Its function is as follows. Catalytic subunit of the V1 complex of vacuolar(H+)-ATPase (V-ATPase), a multisubunit enzyme composed of a peripheral complex (V1) that hydrolyzes ATP and a membrane integral complex (V0) that translocates protons. V-ATPase is responsible for acidifying and maintaining the pH of intracellular compartments. PI-SceI is an endonuclease that can cleave at a site present in a VMA1 allele that lacks the derived endonuclease segment of the open reading frame; cleavage at this site only occurs during meiosis and initiates 'homing', a genetic event that converts a VMA1 allele lacking VDE into one that contains it. The sequence is that of V-type proton ATPase catalytic subunit A from Saccharomyces cerevisiae (strain ATCC 204508 / S288c) (Baker's yeast).